A 243-amino-acid chain; its full sequence is Isoprenyl transferase 2 (243 aa).

The active site involves aspartate 23. Mg(2+) is bound at residue aspartate 23. Residues 24–27, tryptophan 28, arginine 36, histidine 40, and 68–70 contribute to the substrate site; these read GNGR and STE. Asparagine 71 acts as the Proton acceptor in catalysis. Residues tryptophan 72, arginine 74, arginine 191, and 197–199 each bind substrate; that span reads RTS. Position 210 (glutamate 210) interacts with Mg(2+).

Belongs to the UPP synthase family. As to quaternary structure, homodimer. The cofactor is Mg(2+).

In terms of biological role, catalyzes the condensation of isopentenyl diphosphate (IPP) with allylic pyrophosphates generating different type of terpenoids. This chain is Isoprenyl transferase 2, found in Corynebacterium glutamicum (strain ATCC 13032 / DSM 20300 / JCM 1318 / BCRC 11384 / CCUG 27702 / LMG 3730 / NBRC 12168 / NCIMB 10025 / NRRL B-2784 / 534).